A 331-amino-acid polypeptide reads, in one-letter code: Geranylgeranyl transferase type-2 subunit beta (331 aa).

Position 2 is an N-acetylglycine (glycine 2). Residue threonine 3 is modified to Phosphothreonine. PFTB repeat units lie at residues 20-61 (LEKH…DLMG), 68-109 (REEI…TLYD), 116-157 (VNKV…ALLG), 164-205 (VEKA…AITS), 212-253 (SDLL…KIIG), and 260-302 (REKL…SLLG). A geranylgeranyl diphosphate-binding site is contributed by 190 to 192 (HAG). Zn(2+)-binding residues include aspartate 238 and cysteine 240. 241–244 (YSWW) serves as a coordination point for geranylgeranyl diphosphate. Zn(2+) is bound at residue histidine 290.

This sequence belongs to the protein prenyltransferase subunit beta family. In terms of assembly, heterotrimer composed of RABGGTA, RABGGTB and CHM; within this trimer, RABGGTA and RABGGTB form the catalytic component B, while CHM (component A) mediates peptide substrate binding. The Rab GGTase dimer (RGGT) interacts with CHM (component A) prior to Rab protein binding; the association is stabilized by geranylgeranyl pyrophosphate (GGpp). The CHM:RGGT:Rab complex is destabilized by GGpp. Interaction of RABGGTB with prenylated PTP4A2 precludes its association with RABGGTA and inhibits enzyme activity. Interacts with CHODL. Interacts with non-phosphorylated form of RAB8A; phosphorylation of RAB8A at 'Thr-72' disrupts this interaction. It depends on Zn(2+) as a cofactor.

It carries out the reaction geranylgeranyl diphosphate + L-cysteinyl-[protein] = S-geranylgeranyl-L-cysteinyl-[protein] + diphosphate. Its activity is regulated as follows. The enzymatic reaction requires the aid of a Rab escort protein (also called component A). Its function is as follows. Catalyzes the transfer of a geranylgeranyl moiety from geranylgeranyl diphosphate to both cysteines of Rab proteins with the C-terminal sequence -XXCC, -XCXC and -CCXX, such as RAB1A, RAB3A, RAB5A and RAB7A. The sequence is that of Geranylgeranyl transferase type-2 subunit beta (RABGGTB) from Homo sapiens (Human).